The following is a 232-amino-acid chain: MKFAVIVFPGSNCDRDVVTVTRGLLDQPTRLVWHTEDDLDGCDVAVIPGGFSYGDYLRCGAIARFSPVMQAVRRHAERGGLVIGICNGFQVLTEAGLLPGALVRNRDLQFVCDRVALKVERTDLPWVHSYRPGEVITLPIAHGEGCYYAEEATLAELEENRQVVFRYCRPDGTIDAVGNPNGSLHNIAGLCNRHGNVLGMMPHPERASDPILGGSDGRRLFESLVASALAVV.

Residues 3-232 enclose the Glutamine amidotransferase type-1 domain; the sequence is FAVIVFPGSN…SLVASALAVV (230 aa). The Nucleophile role is filled by Cys86. Catalysis depends on residues His203 and Glu205.

As to quaternary structure, part of the FGAM synthase complex composed of 1 PurL, 1 PurQ and 2 PurS subunits.

The protein resides in the cytoplasm. The enzyme catalyses N(2)-formyl-N(1)-(5-phospho-beta-D-ribosyl)glycinamide + L-glutamine + ATP + H2O = 2-formamido-N(1)-(5-O-phospho-beta-D-ribosyl)acetamidine + L-glutamate + ADP + phosphate + H(+). The catalysed reaction is L-glutamine + H2O = L-glutamate + NH4(+). It functions in the pathway purine metabolism; IMP biosynthesis via de novo pathway; 5-amino-1-(5-phospho-D-ribosyl)imidazole from N(2)-formyl-N(1)-(5-phospho-D-ribosyl)glycinamide: step 1/2. Functionally, part of the phosphoribosylformylglycinamidine synthase complex involved in the purines biosynthetic pathway. Catalyzes the ATP-dependent conversion of formylglycinamide ribonucleotide (FGAR) and glutamine to yield formylglycinamidine ribonucleotide (FGAM) and glutamate. The FGAM synthase complex is composed of three subunits. PurQ produces an ammonia molecule by converting glutamine to glutamate. PurL transfers the ammonia molecule to FGAR to form FGAM in an ATP-dependent manner. PurS interacts with PurQ and PurL and is thought to assist in the transfer of the ammonia molecule from PurQ to PurL. This Gloeobacter violaceus (strain ATCC 29082 / PCC 7421) protein is Phosphoribosylformylglycinamidine synthase subunit PurQ.